A 569-amino-acid polypeptide reads, in one-letter code: 2-succinyl-5-enolpyruvyl-6-hydroxy-3-cyclohexene-1-carboxylate synthase (569 aa).

This sequence belongs to the TPP enzyme family. MenD subfamily. In terms of assembly, homodimer. It depends on Mg(2+) as a cofactor. Mn(2+) is required as a cofactor. The cofactor is thiamine diphosphate.

It catalyses the reaction isochorismate + 2-oxoglutarate + H(+) = 5-enolpyruvoyl-6-hydroxy-2-succinyl-cyclohex-3-ene-1-carboxylate + CO2. It participates in quinol/quinone metabolism; 1,4-dihydroxy-2-naphthoate biosynthesis; 1,4-dihydroxy-2-naphthoate from chorismate: step 2/7. It functions in the pathway quinol/quinone metabolism; menaquinone biosynthesis. Its function is as follows. Catalyzes the thiamine diphosphate-dependent decarboxylation of 2-oxoglutarate and the subsequent addition of the resulting succinic semialdehyde-thiamine pyrophosphate anion to isochorismate to yield 2-succinyl-5-enolpyruvyl-6-hydroxy-3-cyclohexene-1-carboxylate (SEPHCHC). The chain is 2-succinyl-5-enolpyruvyl-6-hydroxy-3-cyclohexene-1-carboxylate synthase from Haemophilus ducreyi (strain 35000HP / ATCC 700724).